Consider the following 569-residue polypeptide: Adenine deaminase (569 aa).

Belongs to the metallo-dependent hydrolases superfamily. Adenine deaminase family. The cofactor is Mn(2+).

The catalysed reaction is adenine + H2O + H(+) = hypoxanthine + NH4(+). The chain is Adenine deaminase from Desulfatibacillum aliphaticivorans.